Here is a 260-residue protein sequence, read N- to C-terminus: 6-carboxyhexanoate--CoA ligase (260 aa).

The protein belongs to the BioW family. Homodimer. The cofactor is Mg(2+).

It carries out the reaction heptanedioate + ATP + CoA = 6-carboxyhexanoyl-CoA + AMP + diphosphate. Its pathway is metabolic intermediate metabolism; pimeloyl-CoA biosynthesis; pimeloyl-CoA from pimelate: step 1/1. Catalyzes the transformation of pimelate into pimeloyl-CoA with concomitant hydrolysis of ATP to AMP. The protein is 6-carboxyhexanoate--CoA ligase of Fibrobacter succinogenes (strain ATCC 19169 / S85).